A 326-amino-acid polypeptide reads, in one-letter code: MTQLDTTTLPDLSAIAGLRARLKQWVRTTPVFDKTDFEPVPGTAVNFKLELLQASGTFKARGAFSNLLALDDDQRAAGVTCVSAGNHAVGVAYAAMRLGIPAKVVMIKTASPARVALCRQYGAEVVLAENGQTAFDTVHRIESEEGRFFVHPFNGYRTVLGTATLGHEWLEQAGALDAVIVPIGGGGLMAGVSTAVKLLAPQCQVIGVEPEGADAMHRSFETGGPVKMGSMQSIADSLMAPHTEQYSYELCRRNVDRLVKVSDDELRAAMRLLFDQLKLATEPACATATAALVGGLKAELAGKRVGVLLCGTNTDAATFARHLGLG.

As to quaternary structure, monomer. Pyridoxal 5'-phosphate serves as cofactor.

It catalyses the reaction L-threo-3-phenylserine = 3-phenylpyruvate + NH4(+). Inhibited by phenylhydrazine, hydroxylamine, p-chloromercuribenzoate, and HgCl(2). The sequence is that of Phenylserine dehydratase from Ralstonia pickettii (Burkholderia pickettii).